A 189-amino-acid chain; its full sequence is Penicillin-binding protein activator LpoB (189 aa).

The signal sequence occupies residues 1 to 16 (MRRILFVALSVMFLAG). Cysteine 17 is lipidated: N-palmitoyl cysteine. Residue cysteine 17 is the site of S-diacylglycerol cysteine attachment. The disordered stretch occupies residues 18 to 52 (PSLPPEQPEPPTPVVPVTPSEKPTPPSEKVPEPPK). A compositionally biased stretch (pro residues) spans 19–45 (SLPPEQPEPPTPVVPVTPSEKPTPPSE).

It belongs to the LpoB family. As to quaternary structure, interacts with PBP1b.

It is found in the cell outer membrane. Functionally, regulator of peptidoglycan synthesis that is essential for the function of penicillin-binding protein 1B (PBP1b). In Photorhabdus laumondii subsp. laumondii (strain DSM 15139 / CIP 105565 / TT01) (Photorhabdus luminescens subsp. laumondii), this protein is Penicillin-binding protein activator LpoB.